We begin with the raw amino-acid sequence, 70 residues long: Large ribosomal subunit protein eL38 (70 aa).

The protein belongs to the eukaryotic ribosomal protein eL38 family.

This chain is Large ribosomal subunit protein eL38 (RpL38), found in Lonomia obliqua (Moth).